The chain runs to 498 residues: Argininosuccinate lyase 1 (498 aa).

This sequence belongs to the lyase 1 family. Argininosuccinate lyase subfamily.

It is found in the cytoplasm. It carries out the reaction 2-(N(omega)-L-arginino)succinate = fumarate + L-arginine. It functions in the pathway amino-acid biosynthesis; L-arginine biosynthesis; L-arginine from L-ornithine and carbamoyl phosphate: step 3/3. This Shouchella clausii (strain KSM-K16) (Alkalihalobacillus clausii) protein is Argininosuccinate lyase 1.